The chain runs to 92 residues: Acylphosphatase (92 aa).

The Acylphosphatase-like domain occupies 5-92 (RVHIIVSGLV…TSCREFRILT (88 aa)). Residues arginine 20 and asparagine 38 contribute to the active site.

This sequence belongs to the acylphosphatase family.

It carries out the reaction an acyl phosphate + H2O = a carboxylate + phosphate + H(+). This is Acylphosphatase (acyP) from Chlorobaculum tepidum (strain ATCC 49652 / DSM 12025 / NBRC 103806 / TLS) (Chlorobium tepidum).